The primary structure comprises 500 residues: Abscisic acid 8'-hydroxylase 3 (500 aa).

The chain crosses the membrane as a helical span at residues 3 to 23 (ASFVIVIVISFFISLAFMCYV). Residue cysteine 426 coordinates heme.

This sequence belongs to the cytochrome P450 family. Requires heme as cofactor.

It localises to the membrane. It catalyses the reaction 2-cis-(+)-abscisate + reduced [NADPH--hemoprotein reductase] + O2 = (+)-8'-hydroxyabscisate + oxidized [NADPH--hemoprotein reductase] + H2O + H(+). Its pathway is plant hormone degradation; abscisic acid degradation. Its function is as follows. Involved in the oxidative degradation of abscisic acid. This Oryza sativa subsp. indica (Rice) protein is Abscisic acid 8'-hydroxylase 3 (CYP707A7).